Here is a 120-residue protein sequence, read N- to C-terminus: Small ribosomal subunit protein uS12c (120 aa).

It belongs to the universal ribosomal protein uS12 family. In terms of assembly, part of the 30S ribosomal subunit.

The protein resides in the plastid. It localises to the apicoplast. In terms of biological role, with S4 and S5 plays an important role in translational accuracy. Located at the interface of the 30S and 50S subunits. The polypeptide is Small ribosomal subunit protein uS12c (rps12) (Eimeria tenella (Coccidian parasite)).